The following is a 165-amino-acid chain: Late embryogenesis abundant protein D-113 (165 aa).

Residues 1-13 show a composition bias toward low complexity; the sequence is MQSMKDAAASAKA. Disordered regions lie at residues 1–76 and 92–165; these read MQSM…IGGT and GGTG…YRSY. The span at 14-60 shows a compositional bias: basic and acidic residues; it reads GMEKAKASMQEKVDQMKTRDPNEKEMARERKEERQEDAELRKQEARH. The span at 67 to 76 shows a compositional bias: gly residues; it reads HVGGGGIGGT. Polar residues predominate over residues 132–155; that stretch reads TTGNQDFPNAASNNAGTRRNTRGG.

The protein belongs to the LEA type 1 family.

In terms of biological role, LEA proteins are late embryonic proteins abundant in higher plant seed embryos. There are two subsets of LEA proteins (5a and 5b), the first ones are expressed when the cotyledon weight reach 80 mg and the second set are expressed above 100 mg. The function of those proteins is not known. This Gossypium hirsutum (Upland cotton) protein is Late embryogenesis abundant protein D-113.